We begin with the raw amino-acid sequence, 326 residues long: Beta-ketoacyl-[acyl-carrier-protein] synthase III (326 aa).

Residues Cys-115 and His-253 contribute to the active site. Residues 254-258 (QANKR) are ACP-binding. Asn-283 is a catalytic residue.

This sequence belongs to the thiolase-like superfamily. FabH family. Homodimer.

The protein resides in the cytoplasm. It carries out the reaction malonyl-[ACP] + acetyl-CoA + H(+) = 3-oxobutanoyl-[ACP] + CO2 + CoA. Its pathway is lipid metabolism; fatty acid biosynthesis. In terms of biological role, catalyzes the condensation reaction of fatty acid synthesis by the addition to an acyl acceptor of two carbons from malonyl-ACP. Catalyzes the first condensation reaction which initiates fatty acid synthesis and may therefore play a role in governing the total rate of fatty acid production. Possesses both acetoacetyl-ACP synthase and acetyl transacylase activities. Its substrate specificity determines the biosynthesis of branched-chain and/or straight-chain of fatty acids. This Bradyrhizobium diazoefficiens (strain JCM 10833 / BCRC 13528 / IAM 13628 / NBRC 14792 / USDA 110) protein is Beta-ketoacyl-[acyl-carrier-protein] synthase III.